The following is a 312-amino-acid chain: Malate dehydrogenase (312 aa).

NAD(+)-binding positions include 10-15 (GAGNTG) and D34. Residues R85 and R91 each coordinate substrate. NAD(+)-binding positions include N98 and 121–123 (LTN). N123 and R154 together coordinate substrate. The active-site Proton acceptor is the H178.

It belongs to the LDH/MDH superfamily. MDH type 3 family.

The catalysed reaction is (S)-malate + NAD(+) = oxaloacetate + NADH + H(+). Functionally, catalyzes the reversible oxidation of malate to oxaloacetate. The chain is Malate dehydrogenase from Staphylococcus saprophyticus subsp. saprophyticus (strain ATCC 15305 / DSM 20229 / NCIMB 8711 / NCTC 7292 / S-41).